Consider the following 1285-residue polypeptide: Protein crumbs homolog 2 (1285 aa).

Residues methionine 1 to serine 28 form the signal peptide. The required for maximum inhibition of APP amyloid-beta peptide secretion stretch occupies residues methionine 1–tyrosine 350. An EGF-like 1 domain is found at glutamate 67–glutamate 106. 27 cysteine pairs are disulfide-bonded: cysteine 71/cysteine 82, cysteine 76/cysteine 94, cysteine 96/cysteine 105, cysteine 112/cysteine 123, cysteine 117/cysteine 132, cysteine 134/cysteine 143, cysteine 150/cysteine 161, cysteine 155/cysteine 170, cysteine 172/cysteine 181, cysteine 188/cysteine 199, cysteine 193/cysteine 208, cysteine 210/cysteine 220, cysteine 227/cysteine 238, cysteine 232/cysteine 247, cysteine 249/cysteine 258, cysteine 265/cysteine 276, cysteine 270/cysteine 306, cysteine 308/cysteine 317, cysteine 324/cysteine 335, cysteine 329/cysteine 344, cysteine 346/cysteine 355, cysteine 362/cysteine 373, cysteine 367/cysteine 382, cysteine 384/cysteine 393, cysteine 400/cysteine 411, cysteine 405/cysteine 424, and cysteine 426/cysteine 435. In terms of domain architecture, EGF-like 2; calcium-binding spans aspartate 108–glutamate 144. The EGF-like 3; calcium-binding domain maps to glutamate 146–glutamine 182. One can recognise an EGF-like 4; calcium-binding domain in the interval aspartate 184–glutamate 221. 2 EGF-like domains span residues glutamate 223 to glutamate 259 and aspartate 261 to glycine 318. N-linked (GlcNAc...) asparagine glycosylation occurs at asparagine 235. An O-linked (Glc...) serine glycan is attached at serine 267. The EGF-like 7; calcium-binding domain maps to glutamate 320–glutamate 356. The 37-residue stretch at aspartate 358 to serine 394 folds into the EGF-like 8; calcium-binding domain. In terms of domain architecture, EGF-like 9 spans glutamine 396–glycine 436. Residues histidine 431–cysteine 603 form the Laminin G-like 1 domain. N-linked (GlcNAc...) asparagine glycans are attached at residues asparagine 438 and asparagine 478. 4 cysteine pairs are disulfide-bonded: cysteine 579–cysteine 603, cysteine 609–cysteine 620, cysteine 614–cysteine 629, and cysteine 631–cysteine 640. The 37-residue stretch at arginine 605–alanine 641 folds into the EGF-like 10 domain. The Laminin G-like 2 domain occupies alanine 647–cysteine 805. N-linked (GlcNAc...) asparagine glycans are attached at residues asparagine 669, asparagine 690, asparagine 786, and asparagine 800. Cystine bridges form between cysteine 766–cysteine 805, cysteine 811–cysteine 822, cysteine 816–cysteine 831, and cysteine 833–cysteine 842. Residues serine 807–alanine 843 form the EGF-like 11 domain. Asparagine 836, asparagine 886, asparagine 926, and asparagine 1009 each carry an N-linked (GlcNAc...) asparagine glycan. The Laminin G-like 3 domain maps to glutamate 871–cysteine 1054. 13 cysteine pairs are disulfide-bonded: cysteine 1013–cysteine 1054, cysteine 1060–cysteine 1071, cysteine 1065–cysteine 1080, cysteine 1082–cysteine 1091, cysteine 1098–cysteine 1108, cysteine 1103–cysteine 1118, cysteine 1120–cysteine 1129, cysteine 1138–cysteine 1150, cysteine 1144–cysteine 1159, cysteine 1161–cysteine 1170, cysteine 1177–cysteine 1188, cysteine 1182–cysteine 1197, and cysteine 1199–cysteine 1208. 4 EGF-like domains span residues glycine 1056–glutamate 1092, histidine 1094–arginine 1130, proline 1134–glutamine 1171, and proline 1173–glutamate 1209. N-linked (GlcNAc...) asparagine glycans are attached at residues asparagine 1141 and asparagine 1158. The chain crosses the membrane as a helical span at residues valine 1225–isoleucine 1245. Residues arginine 1249–isoleucine 1285 form an interaction with EPB41L5 region.

This sequence belongs to the Crumbs protein family. Associates with the gamma-secretase complex via interaction (via the transmembrane domain) with PSEN1/PS1. Interacts (via intracellular domain) with EPB41L5. Interacts with PALS1. Post-translationally, O-glucosylated by POGLUT1 at Ser-267; consists of an O-glucose trisaccharide, in which the O-glucose is elongated by the addition of two xylose residues. O-glucosylation is required for localization at the plasma membrane. N-glycosylated. Expressed in glomeruli, podocytes of the glomerular capillary loops, and parietal glomerular epithelial cells in the kidney (at protein level). Expressed in retina, fetal eye and brain. Also expressed in kidney, RPE/choroid, and at low levels in lung, placenta, and heart.

Its subcellular location is the apical cell membrane. The protein localises to the cytoplasm. It is found in the cell junction. The protein resides in the secreted. Apical polarity protein that plays a central role during the epithelial-to-mesenchymal transition (EMT) at gastrulation, when newly specified mesodermal cells move inside the embryo. Acts by promoting cell ingression, the process by which cells leave the epithelial epiblast and move inside the embryo to form a new tissue layer. The anisotropic distribution of CRB2 and MYH10/myosin-IIB at cell edges define which cells will ingress: cells with high apical CRB2 are probably extruded from the epiblast by neighboring cells with high levels of apical MYH10/myosin-IIB. Plays a role in the maintenance of retinal neuroepithelium organization, structural integrity, adhesion, photoreceptor polarity and retinal photoreceptor layer thickness. May play a role in determining the length of cone photoreceptor outer segments and proliferation of late-born progenitor cells. Also required for maintenance of the apical polarity complex during development of the cortex. Inhibits gamma-secretase-dependent cleavage of APP and secretion of amyloid-beta peptide 40 and amyloid-beta peptide 42, and thereby inhibits gamma-secretase-dependent Notch transcription. The sequence is that of Protein crumbs homolog 2 from Homo sapiens (Human).